Here is a 489-residue protein sequence, read N- to C-terminus: MRRSIRNLAENVEKCPYSPTSSPNTPPRTFSEIPGPREIPVIGNIGYFKYAVKSDAKTIENYNQHLEEMYKKYGKIVKENLGFGRKYVVHIFDPADVQTVLAADGKTPFIVPLQETTQKYREMKGMNPGLGNLNGPEWYRLRSSVQHAMMRPQSVQTYLPFSQIVSNDLVCHVADQQKRFGLVDMQKVAGRWSLESAGQILFEKSLGSLGNRSEWADGLIELNKKIFQLSAKMRLGLPIFRLFSTPSWRKMVDLEDQFYSEVDRLMDDALDKLKVNDSDSKDMRFASYLINRKELNRRDVKVILLSMFSDGLSTTAPMLIYNLYNLATHPEALKEIQKEIKEDPASSKLTFLRACIKETFRMFPIGTEVSRVTQKNLILSGYEVPAGTAVDINTNVLMRHEVLFSDSPREFKPQRWLEKSKEVHPFAYLPFGFGPRMCAGRRFAEQDLLTSLAKLCGNYDIRHRGDPITQIYETLLLPRGDCTFEFKKL.

Positions Val12–Ser31 are disordered. Positions Pro16–Thr29 are enriched in low complexity. Position 438 (Cys438) interacts with heme.

It belongs to the cytochrome P450 family. The cofactor is heme.

Its function is as follows. Cytochromes P450 are a group of heme-thiolate monooxygenases. They oxidize a variety of structurally unrelated compounds, including steroids, fatty acids, and xenobiotics. In Caenorhabditis elegans, this protein is Probable cytochrome P450 CYP44 (cyp-44A1).